The following is an 89-amino-acid chain: MAKKSKIAKAKRQEKLVKQYATKRAALKAKGDYIGLSKLPRDSSPVRLHHRDVLDGRPHAYMRKFGMSRLNFRELAHKGQIPGVRKASW.

This sequence belongs to the universal ribosomal protein uS14 family. Part of the 30S ribosomal subunit. Contacts proteins S3 and S10.

Binds 16S rRNA, required for the assembly of 30S particles and may also be responsible for determining the conformation of the 16S rRNA at the A site. In Lacticaseibacillus casei (strain BL23) (Lactobacillus casei), this protein is Small ribosomal subunit protein uS14.